Here is a 305-residue protein sequence, read N- to C-terminus: MHIHVLGSAAGGGFPQWNCNCPNCDGLRKGTIKAKKRTQSSICVSADGINWVLFNTSPDILQQIQEFAPLQPGRAIRDTGVVGIVLIDAQIDHTTGLLMLREGQVKREIYCTDMVYQDLTTGNPLLNILDHYCGVNRHDIPIDGKHSFSVEHAPGLRFTAVALKSAAPPYSPHRHDPHPGDTIGVLIEDLNNGKKAFYAPGLGEIEPHLPALMEQADCIMVDGTFWTDTEMLDMGLMSKKARDIGHNPQSGPGGMMEVLDGYPGARRVLIHINNTNPILREDSAERVELTRRGIEVAYDGMDIIL.

It belongs to the PqqB family.

The protein operates within cofactor biosynthesis; pyrroloquinoline quinone biosynthesis. Functionally, may be involved in the transport of PQQ or its precursor to the periplasm. The protein is Coenzyme PQQ synthesis protein B of Methylobacillus flagellatus.